Consider the following 336-residue polypeptide: tRNA N6-adenosine threonylcarbamoyltransferase (336 aa).

Fe cation-binding residues include His114 and His118. Substrate is bound by residues 136 to 140 (LVSGG), Asp169, Gly182, Asp186, and Asn275. Asp301 provides a ligand contact to Fe cation.

Belongs to the KAE1 / TsaD family. Fe(2+) serves as cofactor.

Its subcellular location is the cytoplasm. The enzyme catalyses L-threonylcarbamoyladenylate + adenosine(37) in tRNA = N(6)-L-threonylcarbamoyladenosine(37) in tRNA + AMP + H(+). Its function is as follows. Required for the formation of a threonylcarbamoyl group on adenosine at position 37 (t(6)A37) in tRNAs that read codons beginning with adenine. Is involved in the transfer of the threonylcarbamoyl moiety of threonylcarbamoyl-AMP (TC-AMP) to the N6 group of A37, together with TsaE and TsaB. TsaD likely plays a direct catalytic role in this reaction. In Streptococcus pneumoniae (strain CGSP14), this protein is tRNA N6-adenosine threonylcarbamoyltransferase.